The chain runs to 286 residues: ATP phosphoribosyltransferase (286 aa).

The protein belongs to the ATP phosphoribosyltransferase family. Long subfamily. Requires Mg(2+) as cofactor.

It localises to the cytoplasm. It carries out the reaction 1-(5-phospho-beta-D-ribosyl)-ATP + diphosphate = 5-phospho-alpha-D-ribose 1-diphosphate + ATP. It functions in the pathway amino-acid biosynthesis; L-histidine biosynthesis; L-histidine from 5-phospho-alpha-D-ribose 1-diphosphate: step 1/9. Feedback inhibited by histidine. Catalyzes the condensation of ATP and 5-phosphoribose 1-diphosphate to form N'-(5'-phosphoribosyl)-ATP (PR-ATP). Has a crucial role in the pathway because the rate of histidine biosynthesis seems to be controlled primarily by regulation of HisG enzymatic activity. The protein is ATP phosphoribosyltransferase of Paenarthrobacter aurescens (strain TC1).